The following is a 236-amino-acid chain: Ribose-5-phosphate isomerase A 2 (236 aa).

Substrate-binding positions include 31–34 (SGTT), 86–89 (DGPD), and 99–102 (KGGG). Catalysis depends on glutamate 108, which acts as the Proton acceptor. A substrate-binding site is contributed by lysine 126.

It belongs to the ribose 5-phosphate isomerase family. As to quaternary structure, homodimer.

The enzyme catalyses aldehydo-D-ribose 5-phosphate = D-ribulose 5-phosphate. Its pathway is carbohydrate degradation; pentose phosphate pathway; D-ribose 5-phosphate from D-ribulose 5-phosphate (non-oxidative stage): step 1/1. In terms of biological role, catalyzes the reversible conversion of ribose-5-phosphate to ribulose 5-phosphate. The sequence is that of Ribose-5-phosphate isomerase A 2 from Yersinia pestis.